We begin with the raw amino-acid sequence, 168 residues long: SPbeta prophage-derived uncharacterized protein YonX (168 aa).

Positions 1 to 53 (MNAQLFNLESRLDELENEINTQYCELDTNLDALKSNRIELESQLEKFESSLTN) form a coiled coil.

The polypeptide is SPbeta prophage-derived uncharacterized protein YonX (yonX) (Bacillus subtilis (strain 168)).